The sequence spans 178 residues: Fatty-acid and retinol-binding protein 1 (178 aa).

Residues Met-1–Ala-16 form the signal peptide. 2 coiled-coil regions span residues Asp-67–Asn-89 and Lys-130–Val-153.

Belongs to the fatty-acid and retinol-binding protein (FARBP) family. Post-translationally, not glycosylated.

The protein resides in the secreted. In terms of biological role, binds retinol and different fatty acids. The chain is Fatty-acid and retinol-binding protein 1 from Brugia pahangi (Filarial nematode worm).